A 202-amino-acid chain; its full sequence is AFG2-interacting ribosome maturation factor (202 aa).

As to quaternary structure, part of the 55LCC heterohexameric ATPase complex. Does not associate with pre-60S ribosomal particles.

Its subcellular location is the nucleus. It is found in the cytoplasm. Part of the 55LCC heterohexameric ATPase complex which is chromatin-associated and promotes replisome proteostasis to maintain replication fork progression and genome stability. Required for replication fork progression, sister chromatid cohesion, and chromosome stability. The ATPase activity is specifically enhanced by replication fork DNA and is coupled to cysteine protease-dependent cleavage of replisome substrates in response to replication fork damage. Uses ATPase activity to process replisome substrates in S-phase, facilitating their proteolytic turnover from chromatin to ensure DNA replication and mitotic fidelity. Involved in the cytoplasmic maturation steps of pre-60S ribosomal particles by promoting the release of shuttling protein RSL24D1/RLP24 from the pre-ribosomal particles. Plays an essential role in early embryonic development. The chain is AFG2-interacting ribosome maturation factor (airim) from Danio rerio (Zebrafish).